An 897-amino-acid chain; its full sequence is N-terminal acetyltransferase A complex auxiliary subunit NAA15 (897 aa).

7 TPR repeats span residues 77–110, 111–144, 189–222, 223–256, 298–331, 380–413, and 488–523; these read HVCW…DPDN, LEIL…KPNH, TEMI…IVDK, LSYK…NPDN, SSAV…KGVP, LWTL…TPTV, and QCMW…YADI. Disordered stretches follow at residues 578–640 and 863–897; these read KSTA…DPHG and SRKS…SVAT. Residues 602-617 show a composition bias toward basic and acidic residues; the sequence is KAEARAKKEAESKSEE. Positions 863 to 872 are enriched in polar residues; that stretch reads SRKSNENGDT.

Part of the NatA complex. Associates with ribosomes. Interacts with NAA10. As to expression, expressed in leaves, roots, shoots and flowers.

Its function is as follows. Auxiliary subunit of the NatA N-alpha-acetyltransferase complex. Required for male gametocyte development, embryogenesis, suspensor development and the formation of the quiescent center (QC) in the root meristem. Involved in plant immunity through the regulation of SNC1 stability. Required for embryo development. The chain is N-terminal acetyltransferase A complex auxiliary subunit NAA15 from Arabidopsis thaliana (Mouse-ear cress).